A 184-amino-acid chain; its full sequence is Nucleoside triphosphate pyrophosphatase (184 aa).

Catalysis depends on aspartate 71, which acts as the Proton acceptor.

Belongs to the Maf family. Requires a divalent metal cation as cofactor.

The protein localises to the cytoplasm. It carries out the reaction a ribonucleoside 5'-triphosphate + H2O = a ribonucleoside 5'-phosphate + diphosphate + H(+). The catalysed reaction is a 2'-deoxyribonucleoside 5'-triphosphate + H2O = a 2'-deoxyribonucleoside 5'-phosphate + diphosphate + H(+). Functionally, nucleoside triphosphate pyrophosphatase. May have a dual role in cell division arrest and in preventing the incorporation of modified nucleotides into cellular nucleic acids. The chain is Nucleoside triphosphate pyrophosphatase from Synechococcus sp. (strain CC9605).